A 389-amino-acid polypeptide reads, in one-letter code: Alanine racemase (389 aa).

Catalysis depends on lysine 48, which acts as the Proton acceptor; specific for D-alanine. N6-(pyridoxal phosphate)lysine is present on lysine 48. Arginine 144 provides a ligand contact to substrate. The active-site Proton acceptor; specific for L-alanine is the tyrosine 281. Residue methionine 329 participates in substrate binding.

It belongs to the alanine racemase family. It depends on pyridoxal 5'-phosphate as a cofactor.

It carries out the reaction L-alanine = D-alanine. It functions in the pathway amino-acid biosynthesis; D-alanine biosynthesis; D-alanine from L-alanine: step 1/1. Its function is as follows. Catalyzes the interconversion of L-alanine and D-alanine. May also act on other amino acids. The chain is Alanine racemase (alr) from Leptospira interrogans serogroup Icterohaemorrhagiae serovar copenhageni (strain Fiocruz L1-130).